Here is a 361-residue protein sequence, read N- to C-terminus: Histidine biosynthesis bifunctional protein HisB (361 aa).

The histidinol-phosphatase stretch occupies residues 1–172 (MTQPTLFIDR…PKTTACKRPP (172 aa)). The active-site Nucleophile is the aspartate 9. Residues aspartate 9 and aspartate 11 each coordinate Mg(2+). The Proton donor role is filled by aspartate 11. Zn(2+) is bound by residues cysteine 92, histidine 94, cysteine 100, and cysteine 102. Aspartate 129 contacts Mg(2+). The tract at residues 173–361 (RYAEVVRTTK…NELPSSKGVL (189 aa)) is imidazoleglycerol-phosphate dehydratase.

The protein in the N-terminal section; belongs to the histidinol-phosphatase family. This sequence in the C-terminal section; belongs to the imidazoleglycerol-phosphate dehydratase family. Requires Mg(2+) as cofactor. Zn(2+) serves as cofactor.

Its subcellular location is the cytoplasm. It carries out the reaction D-erythro-1-(imidazol-4-yl)glycerol 3-phosphate = 3-(imidazol-4-yl)-2-oxopropyl phosphate + H2O. The enzyme catalyses L-histidinol phosphate + H2O = L-histidinol + phosphate. The protein operates within amino-acid biosynthesis; L-histidine biosynthesis; L-histidine from 5-phospho-alpha-D-ribose 1-diphosphate: step 6/9. It functions in the pathway amino-acid biosynthesis; L-histidine biosynthesis; L-histidine from 5-phospho-alpha-D-ribose 1-diphosphate: step 8/9. This chain is Histidine biosynthesis bifunctional protein HisB, found in Actinobacillus pleuropneumoniae serotype 3 (strain JL03).